Reading from the N-terminus, the 1845-residue chain is Helicase swr-1 (1845 aa).

The span at 1–13 (MTTMMTDSGTASD) shows a compositional bias: polar residues. Residues 1 to 329 (MTTMMTDSGT…GASRATPRIK (329 aa)) form a disordered region. Residues 24-38 (NDTTTTTTTTTTPGD) show a composition bias toward low complexity. A compositionally biased stretch (polar residues) spans 63 to 84 (SKSYSSTHHVPAIDNTSTTNAN). Residues 98 to 108 (SPLSSISSPLS) show a composition bias toward low complexity. Basic and acidic residues predominate over residues 168-180 (PKPESPPWKKFEA). The segment covering 216 to 243 (AIQTSPVSNKSSASTSRKPAPASSSNSK) has biased composition (polar residues). Composition is skewed to pro residues over residues 248–258 (KMPPPPPPPKA) and 283–292 (PRRPATPPKP). Positions 418–493 (PEAEEEPPRQ…EMEASKAKWR (76 aa)) constitute an HSA domain. 2 disordered regions span residues 539–713 (QKLQ…LFFG) and 749–935 (ELQV…TVKT). A compositionally biased stretch (acidic residues) spans 549–565 (DGDEITDEDEDEDDEDL). Residues 574-585 (GDEKESDEHSDQ) are compositionally biased toward basic and acidic residues. Acidic residues-rich tracts occupy residues 586–608 (GSDE…SSED) and 663–704 (NDDD…DDEP). Composition is skewed to polar residues over residues 762–777 (TNGT…SQTE) and 815–834 (TNDS…NQTL). The span at 888–897 (SQSQTQSPKT) shows a compositional bias: low complexity. A compositionally biased stretch (basic and acidic residues) spans 898-909 (TDTKPTDVDTPH). Residues 922-933 (RQSSPQPTTPTV) are compositionally biased toward polar residues. In terms of domain architecture, Helicase ATP-binding spans 957–1122 (AGLYANNTNG…WSLLYFLAPP (166 aa)). An ATP-binding site is contributed by 970 to 977 (DEMGLGKT). The short motif at 1073–1076 (DEAH) is the DEAH box element. Residues 1510–1660 (ALDKLLRKLQ…DVVIQEGEFT (151 aa)) enclose the Helicase C-terminal domain. Disordered stretches follow at residues 1702-1724 (TTGA…PPVR), 1751-1783 (QDEA…GGEE), and 1816-1845 (LEGT…SRKR). Residues 1704-1718 (GAGGYDGTADGGGGA) show a composition bias toward gly residues. Residues 1769 to 1781 (DGLADLDGQLLGG) are compositionally biased toward low complexity. Positions 1826 to 1845 (DRKKGRDRNRNRKGKDSRKR) are enriched in basic residues.

This sequence belongs to the SNF2/RAD54 helicase family. SWR1 subfamily. As to quaternary structure, component of the SWR1 chromatin-remodeling complex.

It is found in the nucleus. The enzyme catalyses ATP + H2O = ADP + phosphate + H(+). Its function is as follows. Catalytic component of the SWR1 complex which mediates the ATP-dependent exchange of histone H2A for the H2A variant H2A.Z leading to transcriptional regulation of selected genes by chromatin remodeling. This Neurospora crassa (strain ATCC 24698 / 74-OR23-1A / CBS 708.71 / DSM 1257 / FGSC 987) protein is Helicase swr-1 (crf1-1).